Reading from the N-terminus, the 127-residue chain is RxLR effector protein SFI3 (127 aa).

The N-terminal stretch at 1 to 20 (MRFLLVAVVAMMALVSSSTA) is a signal peptide. The RxLR-dEER motif lies at 40–62 (RSLRNTEERSIAAILAEAGEEDR). Residues 72 to 107 (WYKAKLTPTQVKTVLGVSQAEMNNVAKQLQRLYLGY) form a WY-domain region.

Belongs to the RxLR effector family. In terms of assembly, forms an unusual trans-homodimer. Interacts with host UBK.

The protein localises to the secreted. It is found in the host nucleus. Its subcellular location is the host nucleolus. Functionally, effector that suppresses flg22-induced post-translational MAP kinase activation in potato and tomato, but not in Arabidopsis. The perception of highly conserved pathogen- or microbe-associated molecular patterns (PAMPs/MAMPs), such as flg22, triggers converging signaling pathways recruiting MAP kinase cascades and inducing transcriptional re-programming, yielding a generic antimicrobial response. Does not suppress programmed cell death triggered by the P.infestans elicitin infestin-1 (INF1), or by co-expression of tomato Cf4 with Cladosporium fulvum Avr4. Suppresses early pattern-triggered immunity (PTI) via interaction with the U-box-kinase protein UBK, a positive regulator of specific PTI pathways in both potato and Nicotiana benthamiana. The chain is RxLR effector protein SFI3 from Phytophthora infestans (strain T30-4) (Potato late blight agent).